The sequence spans 268 residues: Proteasome subunit beta type-4 (268 aa).

It belongs to the peptidase T1B family. As to quaternary structure, the 26S proteasome consists of a 20S proteasome core and two 19S regulatory subunits. The 20S proteasome core is composed of 28 subunits that are arranged in four stacked rings, resulting in a barrel-shaped structure. The two end rings are each formed by seven alpha subunits, and the two central rings are each formed by seven beta subunits. The catalytic chamber with the active sites is on the inside of the barrel.

It localises to the cytoplasm. Its subcellular location is the nucleus. Its function is as follows. Non-catalytic component of the proteasome, a multicatalytic proteinase complex which is characterized by its ability to cleave peptides with Arg, Phe, Tyr, Leu, and Glu adjacent to the leaving group at neutral or slightly basic pH. The proteasome has an ATP-dependent proteolytic activity. The chain is Proteasome subunit beta type-4 (Prosbeta7) from Drosophila melanogaster (Fruit fly).